A 62-amino-acid polypeptide reads, in one-letter code: Conotoxin Pl168 (62 aa).

Residues 1-21 (MGMRMMFTVFLLVVLATTVVS) form the signal peptide. A propeptide spanning residues 22 to 40 (FTLDRASDGANAAADLVAR) is cleaved from the precursor. 2 disulfides stabilise this stretch: Cys-46/Cys-52 and Cys-47/Cys-61.

It belongs to the conotoxin A superfamily. Both Pro-53 and Pro-62 are not in cis/trans isomerization. As to expression, expressed by the venom duct.

It localises to the secreted. Functionally, probable neurotoxin with unknown target. Possibly targets ion channels. The sequence is that of Conotoxin Pl168 from Conus planorbis (Planorbis cone).